A 156-amino-acid polypeptide reads, in one-letter code: Arginine repressor (156 aa).

This sequence belongs to the ArgR family.

The protein localises to the cytoplasm. The protein operates within amino-acid biosynthesis; L-arginine biosynthesis [regulation]. Regulates arginine biosynthesis genes. The sequence is that of Arginine repressor from Shewanella putrefaciens (strain CN-32 / ATCC BAA-453).